Reading from the N-terminus, the 517-residue chain is MAFRDSTRDFNRSRPEKRHASRSSSPRSFRPSNQNARANYNLPRVRDAMKEEERSRETKEMQEREFLRLQQLRRAIIRLKNDRSKPIDKLLVSVYLMPGPEWEENGEKNSIDFGTVDMFDPLSVIQSYKAEDLEEISRNIGDIQQLETNQCRLTYWKYVKMLVNSRMEHNKVGQFSRGLKVVAGEVQRILAPKSFEQLEQLEAQIQKKLKSNVPLDTDYWVDLLNSLKSYKAIAYLKKTFNEELQIRKNKLDNEEWDKAFSDAKKLSNMKDREEKLYIVPIDPKPILRAQAIPRRIQPEEQADYEKELNDHVNIVKSSTYIPISIPTQKQKPTLPKNSNLINEDEFSIANRARLEREYLQSDDAEEQEMLGDYVEGQTRVVNENGVTLKKPHYFNRVLLGFEWNSYNQAHFNEAHPPPKAVQGYRFNVFYPDLIGTGRAPTYRIERTRRKNKSDTTDLQDDVCIIRFIAGEPYQDIAFSIVDKDWDYSAKRDHGFKSSFDNGVLSLHFRFKKLHHRR.

Over residues 1–14 (MAFRDSTRDFNRSR) the composition is skewed to basic and acidic residues. A disordered region spans residues 1–59 (MAFRDSTRDFNRSRPEKRHASRSSSPRSFRPSNQNARANYNLPRVRDAMKEEERSRETK). The segment covering 22–32 (RSSSPRSFRPS) has biased composition (low complexity). The span at 44-59 (RVRDAMKEEERSRETK) shows a compositional bias: basic and acidic residues.

The protein belongs to the CACTIN family. As to quaternary structure, interacts with sde2. Interacts with cdc5.

Functionally, plays a role in pre-mRNA splicing by facilitating excision of introns featuring long spacing between the branchpoint and 3'-splice site (ss). Recruited to the spliceosome by sde2, which may enable folding of the RNA between the BP and 3'-ss to guide the splice site towards the spliceosome's catalytic center. Assists the splicing of several components involved in chromatin organization. This is Splicing factor cactin from Schizosaccharomyces pombe (strain 972 / ATCC 24843) (Fission yeast).